The primary structure comprises 573 residues: PCNA-interacting partner (573 aa).

Residues 492 to 532 (TGGQVKNKPCKNVANKRSKRKQVDIQSETTNAQENEPPQKK) form a disordered region. Residues 515–527 (DIQSETTNAQENE) show a composition bias toward polar residues.

The protein belongs to the PARI family.

The protein resides in the cytoplasm. It is found in the nucleus. In terms of biological role, required to suppress inappropriate homologous recombination, thereby playing a central role DNA repair and in the maintenance of genomic stability. The protein is PCNA-interacting partner (parpbp) of Xenopus tropicalis (Western clawed frog).